The sequence spans 509 residues: Glycerol kinase (509 aa).

T17 is a binding site for ADP. ATP contacts are provided by T17, T18, and S19. T17 serves as a coordination point for sn-glycerol 3-phosphate. An ADP-binding site is contributed by R21. 4 residues coordinate sn-glycerol 3-phosphate: R87, E88, Y139, and D256. R87, E88, Y139, D256, and Q257 together coordinate glycerol. Positions 278 and 322 each coordinate ADP. 4 residues coordinate ATP: T278, G322, Q326, and A423. ADP-binding residues include A423 and N427.

It belongs to the FGGY kinase family.

The catalysed reaction is glycerol + ATP = sn-glycerol 3-phosphate + ADP + H(+). Its pathway is polyol metabolism; glycerol degradation via glycerol kinase pathway; sn-glycerol 3-phosphate from glycerol: step 1/1. Its activity is regulated as follows. Inhibited by fructose 1,6-bisphosphate (FBP). Its function is as follows. Key enzyme in the regulation of glycerol uptake and metabolism. Catalyzes the phosphorylation of glycerol to yield sn-glycerol 3-phosphate. The polypeptide is Glycerol kinase (Corynebacterium glutamicum (strain R)).